Here is a 119-residue protein sequence, read N- to C-terminus: uncharacterized protein (119 aa).

A disordered region spans residues 67–119 (LGLKEVQKKSNEGLNEVQGVADINKQKRPANSQDSSSVEGDIQNFLEKVTGKN). Residues 95–104 (PANSQDSSSV) are compositionally biased toward polar residues.

This is an uncharacterized protein from Anabaena variabilis.